The chain runs to 435 residues: UDP-N-acetylmuramate--L-alanine ligase (435 aa).

Residue 108 to 114 (GAHGKST) coordinates ATP.

This sequence belongs to the MurCDEF family.

Its subcellular location is the cytoplasm. The enzyme catalyses UDP-N-acetyl-alpha-D-muramate + L-alanine + ATP = UDP-N-acetyl-alpha-D-muramoyl-L-alanine + ADP + phosphate + H(+). Its pathway is cell wall biogenesis; peptidoglycan biosynthesis. In terms of biological role, cell wall formation. This is UDP-N-acetylmuramate--L-alanine ligase from Campylobacter curvus (strain 525.92).